The sequence spans 866 residues: Retinoblastoma-related protein 2 (866 aa).

The segment at 274–475 (TPITSAMTTA…EKGSSLYNSL (202 aa)) is domain A. The interval 274–721 (TPITSAMTTA…NEVFVPAAKP (448 aa)) is pocket. Residues 476-593 (IVARPSVASE…PVGGNEKCAD (118 aa)) are spacer. The disordered stretch occupies residues 513–551 (LPATPSKKRAAGRDDNADPRSPKRPCNESRSPVVEHNLQ). Basic and acidic residues predominate over residues 523 to 539 (AGRDDNADPRSPKRPCN). The domain B stretch occupies residues 594 to 721 (VTIQIFFSKI…NEVFVPAAKP (128 aa)). Disordered regions lie at residues 731–754 (TRPE…PFPN) and 839–866 (SLGQ…KPDT). Over residues 841–850 (GQPNGGSTSL) the composition is skewed to polar residues.

It belongs to the retinoblastoma protein (RB) family. As to expression, ubiquitous.

The protein resides in the nucleus. In terms of biological role, regulator of biological processes that recruits a histone deacetylase to control gene transcription. May play a role in the entry into mitosis, negatively regulating the cell proliferation. Formation of stable complexes with geminiviridae replication-associated proteins may create a cellular environment which favors viral DNA replication. This Zea mays (Maize) protein is Retinoblastoma-related protein 2 (RBR2).